Reading from the N-terminus, the 78-residue chain is Small integral membrane protein 5 (78 aa).

A helical transmembrane segment spans residues Ile32 to Ala52.

It localises to the membrane. In Bos taurus (Bovine), this protein is Small integral membrane protein 5 (SMIM5).